The chain runs to 182 residues: Adenine phosphoribosyltransferase (182 aa).

It belongs to the purine/pyrimidine phosphoribosyltransferase family. Homodimer.

Its subcellular location is the cytoplasm. It catalyses the reaction AMP + diphosphate = 5-phospho-alpha-D-ribose 1-diphosphate + adenine. It functions in the pathway purine metabolism; AMP biosynthesis via salvage pathway; AMP from adenine: step 1/1. In terms of biological role, catalyzes a salvage reaction resulting in the formation of AMP, that is energically less costly than de novo synthesis. This chain is Adenine phosphoribosyltransferase, found in Wolinella succinogenes (strain ATCC 29543 / DSM 1740 / CCUG 13145 / JCM 31913 / LMG 7466 / NCTC 11488 / FDC 602W) (Vibrio succinogenes).